We begin with the raw amino-acid sequence, 626 residues long: Putative ankyrin repeat protein R837 (626 aa).

ANK repeat units lie at residues 42–72 (EYFN…GLIR), 80–109 (TLNT…NHRY), 110–139 (SEDK…NIKS), 140–169 (RNNY…DITV), 171–199 (DYEV…DIKK), 201–230 (NKKR…DVYR), 242–269 (KNYK…YQLS), 270–298 (DTNN…LHEL), 299–328 (NLNQ…DINT), 330–358 (GNSC…RLTS), 393–416 (TIMS…KSSL), 417–446 (DYES…ITKQ), 452–479 (INNS…GINI), 480–509 (CINY…NINE), 510–539 (FGDL…NIYI), 540–569 (IKDN…DYHK), 570–599 (KNEL…KTKT), and 601–626 (FFDP…NEIK).

In Acanthamoeba polyphaga (Amoeba), this protein is Putative ankyrin repeat protein R837.